Here is a 213-residue protein sequence, read N- to C-terminus: mRNA-decapping protein OPG121 (213 aa).

N(7)-methyl-GTP is bound by residues E16 and R50. Positions 30-209 (KDTHVFAACI…EYLSYIYNML (180 aa)) constitute a Nudix hydrolase domain. Residues 111 to 132 (GKLDKKESIKDCLRRELKEESD) carry the Nudix box motif. Mg(2+)-binding residues include E117, E126, E130, D151, and E183. Catalysis depends on E126, which acts as the Nucleophile. D151 is a N(7)-methyl-GTP binding site.

The protein belongs to the Nudix hydrolase family. Mg(2+) serves as cofactor. It depends on Mn(2+) as a cofactor.

The enzyme catalyses a 5'-end (N(7)-methyl 5'-triphosphoguanosine)-guanosine in mRNA + H2O = a 5'-end phospho-guanosine in mRNA + N(7)-methyl-GDP + 2 H(+). Functionally, decapping enzyme that remove the protective 5'-cap from both host and viral mRNAs to commit transcripts for decay by the cellular exonuclease XRN1. Accelerates viral and cellular mRNA turnover to eliminate competing host mRNAs and allow stage-specific synthesis of viral proteins. Acceleration of the turnover of cellular transcripts may even promote the shutoff of host protein synthesis. The sequence is that of mRNA-decapping protein OPG121 (OPG121) from Homo sapiens (Human).